The sequence spans 436 residues: EPS I polysaccharide export inner membrane protein EpsE (436 aa).

The next 12 helical transmembrane spans lie at 20–40 (VLGLGAAVASRGAVFVSNILL), 49–69 (FGLFSYAYVTALNLGLFLATG), 91–111 (LCAFIVLLMALIAVAAAALYL), 133–153 (AAIVLIATAFTQALQSFQYAM), 160–180 (ATISIGAAVLLLTMLWAMGPI), 185–205 (LALTIFLAVNAGAAVSQLLVL), 234–254 (VLTTSMGAPVHWICLSMLAAM), 261–281 (LALFSVAFQWYIAITFIPATL), 307–327 (ALLFGGGLSLALGCASFLLAG), 341–361 (AASSMRSLSVAAALCGVSVLL), 375–395 (FAMAAVYSVIYVAASYLALRL), and 396–416 (GFGATSIGLAMSAAYCCLILF).

The protein to E.coli bicyclomycin resistance protein (BCR).

It is found in the cell inner membrane. Its function is as follows. Probably involved in polymerization and/or export of exopolysaccharide EPS I which functions as a virulence factor. May play a role in export of EPS I or its intermediates across the membranes. This Ralstonia solanacearum (Pseudomonas solanacearum) protein is EPS I polysaccharide export inner membrane protein EpsE (epsE).